We begin with the raw amino-acid sequence, 148 residues long: SsrA-binding protein (148 aa).

Belongs to the SmpB family.

The protein resides in the cytoplasm. Its function is as follows. Required for rescue of stalled ribosomes mediated by trans-translation. Binds to transfer-messenger RNA (tmRNA), required for stable association of tmRNA with ribosomes. tmRNA and SmpB together mimic tRNA shape, replacing the anticodon stem-loop with SmpB. tmRNA is encoded by the ssrA gene; the 2 termini fold to resemble tRNA(Ala) and it encodes a 'tag peptide', a short internal open reading frame. During trans-translation Ala-aminoacylated tmRNA acts like a tRNA, entering the A-site of stalled ribosomes, displacing the stalled mRNA. The ribosome then switches to translate the ORF on the tmRNA; the nascent peptide is terminated with the 'tag peptide' encoded by the tmRNA and targeted for degradation. The ribosome is freed to recommence translation, which seems to be the essential function of trans-translation. The polypeptide is SsrA-binding protein (Ehrlichia ruminantium (strain Welgevonden)).